Reading from the N-terminus, the 464-residue chain is Soluble pyridine nucleotide transhydrogenase (464 aa).

Asp-35 to Cys-44 lines the FAD pocket.

This sequence belongs to the class-I pyridine nucleotide-disulfide oxidoreductase family. The cofactor is FAD.

The protein localises to the cytoplasm. It carries out the reaction NAD(+) + NADPH = NADH + NADP(+). Functionally, conversion of NADPH, generated by peripheral catabolic pathways, to NADH, which can enter the respiratory chain for energy generation. In Stutzerimonas stutzeri (strain A1501) (Pseudomonas stutzeri), this protein is Soluble pyridine nucleotide transhydrogenase.